A 947-amino-acid polypeptide reads, in one-letter code: Microtubule cross-linking factor 3 (947 aa).

Residues 1–21 (MSQPPIGGAAPATAAASPAAA) form the signal peptide. 3 disordered regions span residues 1-251 (MSQP…SYWK), 266-368 (KERA…TLKN), and 496-524 (LSLK…DNED). Composition is skewed to low complexity over residues 9–24 (AAPA…AATE), 72–81 (QQQLQQQQQQ), and 109–137 (APKG…ALGG). Basic and acidic residues predominate over residues 141-151 (GPPEEPPRELE). Residues 164 to 180 (GEGGGGGGEGGGAGGGS) are compositionally biased toward gly residues. Low complexity predominate over residues 214–236 (ASPSPSSSSAGKTPGTGSRNSGS). Residues 237 to 248 (GVAGGGSGGGGS) are compositionally biased toward gly residues. 2 stretches are compositionally biased toward low complexity: residues 287 to 297 (SSRSSPVSGPP) and 304 to 325 (AVAS…AEGS). Residues 342-726 (HPQQLQEQEE…GKVMQLQYEN (385 aa)) adopt a coiled-coil conformation. 2 stretches are compositionally biased toward basic and acidic residues: residues 355-368 (EMEK…TLKN) and 496-513 (LSLK…EKKA). A Phosphoserine modification is found at Ser569. The disordered stretch occupies residues 743–786 (GIRGSPRDSDAESDAGKKESDDDSRPPHRKREGPIGGESDSEEV). The segment covering 747 to 768 (SPRDSDAESDAGKKESDDDSRP) has biased composition (basic and acidic residues). Position 781 is a phosphoserine (Ser781). The stretch at 811-835 (DRQQMKDIRSEAERLGKTIDRLIAD) forms a coiled coil. Residues 915–935 (PIILLILILVLFSSLSYTTIF) traverse the membrane as a helical segment.

This sequence belongs to the MTCL family.

The protein localises to the membrane. The protein is Microtubule cross-linking factor 3 of Homo sapiens (Human).